Reading from the N-terminus, the 83-residue chain is Cardiotoxin 7'' (83 aa).

The N-terminal stretch at 1–21 is a signal peptide; that stretch reads MKTLLLTLVVVTIVCLDLGYT. Intrachain disulfides connect cysteine 24/cysteine 43, cysteine 36/cysteine 61, cysteine 65/cysteine 76, and cysteine 77/cysteine 82.

The protein belongs to the three-finger toxin family. Short-chain subfamily. Orphan group XV sub-subfamily. Expressed by the venom gland.

Its subcellular location is the secreted. The protein localises to the target cell membrane. Functionally, has low cytotoxic activity. This is Cardiotoxin 7'' from Naja atra (Chinese cobra).